The chain runs to 857 residues: Protein dalmatian (857 aa).

Disordered regions lie at residues 1–50 and 146–194; these read MVRT…KLSI and VQKS…FFHR. Polar residues-rich tracts occupy residues 146 to 156 and 165 to 176; these read VQKSTQPQNIK and SPCQQRIRSKSP. Residues Ser-173, Ser-175, Ser-184, and Ser-222 each carry the phosphoserine modification. Positions 251 to 271 are enriched in basic residues; that stretch reads GKPRAKRTAKKVRPVGNRRKV. Residues 251 to 281 are disordered; the sequence is GKPRAKRTAKKVRPVGNRRKVSTKDNEPEPV. Ser-405 carries the post-translational modification Phosphoserine. Disordered regions lie at residues 470–514 and 737–830; these read SICP…NAEN and PPRP…RDIE. The span at 771–781 shows a compositional bias: basic and acidic residues; that stretch reads KQPRRTYVKER. Residues 797–806 are compositionally biased toward acidic residues; that stretch reads SESEDEDEQD. Residues 807–816 show a composition bias toward basic and acidic residues; that stretch reads SHDKSLDSPE. Residues 817-826 show a composition bias toward basic residues; sequence KKRHHVKRPR.

It localises to the nucleus. The protein resides in the chromosome. Functionally, regulator of sister chromatid cohesion in mitosis. Probably involved in development of the central nervous system. This chain is Protein dalmatian (dmt), found in Drosophila melanogaster (Fruit fly).